A 346-amino-acid chain; its full sequence is Phosphoribosylformylglycinamidine cyclo-ligase (346 aa).

Belongs to the AIR synthase family.

Its subcellular location is the cytoplasm. The catalysed reaction is 2-formamido-N(1)-(5-O-phospho-beta-D-ribosyl)acetamidine + ATP = 5-amino-1-(5-phospho-beta-D-ribosyl)imidazole + ADP + phosphate + H(+). It functions in the pathway purine metabolism; IMP biosynthesis via de novo pathway; 5-amino-1-(5-phospho-D-ribosyl)imidazole from N(2)-formyl-N(1)-(5-phospho-D-ribosyl)glycinamide: step 2/2. The chain is Phosphoribosylformylglycinamidine cyclo-ligase from Aliivibrio fischeri (strain ATCC 700601 / ES114) (Vibrio fischeri).